We begin with the raw amino-acid sequence, 59 residues long: Large ribosomal subunit protein bL32 (59 aa).

The interval 1 to 59 (MAVQQNRKTPSKRGMRRSHDALSGPALSVEPQTGETHRRHHVSPDGYYRGRKVMQGRED) is disordered. The span at 49–59 (RGRKVMQGRED) shows a compositional bias: basic residues.

This sequence belongs to the bacterial ribosomal protein bL32 family.

In Alkalilimnicola ehrlichii (strain ATCC BAA-1101 / DSM 17681 / MLHE-1), this protein is Large ribosomal subunit protein bL32.